A 299-amino-acid polypeptide reads, in one-letter code: tRNA dimethylallyltransferase (299 aa).

Residue 11–18 (GPTAVGKT) coordinates ATP. Residue 13 to 18 (TAVGKT) participates in substrate binding. An interaction with substrate tRNA region spans residues 36-39 (DSQQ).

Belongs to the IPP transferase family. As to quaternary structure, monomer. Requires Mg(2+) as cofactor.

The enzyme catalyses adenosine(37) in tRNA + dimethylallyl diphosphate = N(6)-dimethylallyladenosine(37) in tRNA + diphosphate. Its function is as follows. Catalyzes the transfer of a dimethylallyl group onto the adenine at position 37 in tRNAs that read codons beginning with uridine, leading to the formation of N6-(dimethylallyl)adenosine (i(6)A). In Streptococcus pyogenes serotype M49 (strain NZ131), this protein is tRNA dimethylallyltransferase.